The sequence spans 528 residues: UDP-glucuronosyltransferase 2B19 (528 aa).

Positions 1 to 21 are cleaved as a signal peptide; it reads MSMKWTSALLLIQLSCYLSFG. Position 135 is an N6-succinyllysine (lysine 135). Residue asparagine 315 is glycosylated (N-linked (GlcNAc...) asparagine). The helical transmembrane segment at 493–513 threads the bilayer; the sequence is VIGFLLACVATVIFIITKCLF.

It belongs to the UDP-glycosyltransferase family. In terms of tissue distribution, expressed in liver, ovary, prostate, colon, kidney, pancreas, brain, cerebellum, mammary gland and epididymis. Not expressed in small intestine, spleen, bladder, adrenal gland and testis.

The protein resides in the microsome membrane. It localises to the endoplasmic reticulum membrane. It catalyses the reaction glucuronate acceptor + UDP-alpha-D-glucuronate = acceptor beta-D-glucuronoside + UDP + H(+). UDPGT is of major importance in the conjugation and subsequent elimination of potentially toxic xenobiotics and endogenous compounds. This isozyme displays activity toward several classes of xenobiotic substrates: eugenol, 4-methyllumbelliferone, p-nitrophenol, 1-naphthol, p,p'-biphenol, naringenin and o,o'-biphenol. Active also on 3a-hydroxy and 17b-hydroxy positions of steroids. Its function is as follows. Contributes to the formation of androgen glucuronide in extrahepatic steroid target tissues such as the prostate. This Macaca fascicularis (Crab-eating macaque) protein is UDP-glucuronosyltransferase 2B19 (UGT2B19).